Here is a 274-residue protein sequence, read N- to C-terminus: Transmembrane protein 106B (274 aa).

Positions 1-11 are enriched in low complexity; sequence MGKSLSHLPLH. Residues 1–20 are disordered; it reads MGKSLSHLPLHSSKEDAYDG. G2 carries N-myristoyl glycine lipidation. Topologically, residues 2 to 96 are cytoplasmic; it reads GKSLSHLPLH…QRLRPRRTKL (95 aa). S33 is subject to Phosphoserine. The chain crosses the membrane as a helical span at residues 97-117; sequence YVMASVFVCLLLSGLAVFFLF. The Lumenal segment spans residues 118–274; it reads PRSIDVKYIG…EYLNVLQPQQ (157 aa). N-linked (GlcNAc...) asparagine glycosylation is found at N145, N151, N164, and N183. An intrachain disulfide couples C214 to C253. Residue N256 is glycosylated (N-linked (GlcNAc...) asparagine).

It belongs to the TMEM106 family. Can form homomers. Interacts (via N-terminus) with MAP6 (via C-terminus). Interacts (via C-terminus) with the vacuolar-type ATPase subunit ATP6AP1. Interacts (via N-terminus) with AP2M1 and CLTC. Interacts with TMEM106C. In terms of assembly, (Microbial infection) Interacts with SARS coronavirus-2/SARS-CoV-2 spike protein (via RBD domain). Expressed in the brain, including in the frontal cortex (at protein level). Expressed in lung epithelial cells.

The protein localises to the late endosome membrane. It is found in the lysosome membrane. The protein resides in the cell membrane. Functionally, in neurons, involved in the transport of late endosomes/lysosomes. May be involved in dendrite morphogenesis and maintenance by regulating lysosomal trafficking. May act as a molecular brake for retrograde transport of late endosomes/lysosomes, possibly via its interaction with MAP6. In motoneurons, may mediate the axonal transport of lysosomes and axonal sorting at the initial segment. It remains unclear whether TMEM106B affects the transport of moving lysosomes in the anterograde or retrograde direction in neurites and whether it is important in the sorting of lysosomes in axons or in dendrites. In neurons, may also play a role in the regulation of lysosomal size and responsiveness to stress. Required for proper lysosomal acidification. In terms of biological role, (Microbial infection) Plays a role in human coronavirus SARS-CoV-2 infection, but not in common cold coronaviruses HCoV-229E and HCoV-OC43 infections. Involved in ACE2-independent SARS-CoV-2 cell entry. Required for post-endocytic stage of virus entry, facilitates spike-mediated membrane fusion. Virus attachment and endocytosis can also be mediated by other cell surface receptors. The protein is Transmembrane protein 106B of Homo sapiens (Human).